The primary structure comprises 171 residues: MPNPAAGRFGRLAWLWLSLLVLVIDQATKLYFNNALTMYQQIVVIPDYFSWTLAYNTGAAFSFLADGAGWQRWLFALIAVVVSAVLVVWLKRLGRNETWLAVALALVLGGAIGNLYDRIVLGHVVDFILVHWQNRHYFPAFNVADSAITVGAVMLALDMFKSKKSEDPVHD.

Helical transmembrane passes span 12 to 32, 42 to 62, 70 to 90, and 96 to 116; these read LAWLWLSLLVLVIDQATKLYF, IVVIPDYFSWTLAYNTGAAFS, WQRWLFALIAVVVSAVLVVWL, and NETWLAVALALVLGGAIGNLY. Residues aspartate 126 and aspartate 145 contribute to the active site. A helical transmembrane segment spans residues 137–157; the sequence is YFPAFNVADSAITVGAVMLAL.

It belongs to the peptidase A8 family.

It is found in the cell inner membrane. The catalysed reaction is Release of signal peptides from bacterial membrane prolipoproteins. Hydrolyzes -Xaa-Yaa-Zaa-|-(S,diacylglyceryl)Cys-, in which Xaa is hydrophobic (preferably Leu), and Yaa (Ala or Ser) and Zaa (Gly or Ala) have small, neutral side chains.. It functions in the pathway protein modification; lipoprotein biosynthesis (signal peptide cleavage). Its function is as follows. This protein specifically catalyzes the removal of signal peptides from prolipoproteins. The protein is Lipoprotein signal peptidase of Pseudomonas putida (strain ATCC 47054 / DSM 6125 / CFBP 8728 / NCIMB 11950 / KT2440).